We begin with the raw amino-acid sequence, 351 residues long: Protein arginine N-methyltransferase 1 (351 aa).

Positions 30–331 constitute an SAM-dependent MTase PRMT-type domain; the sequence is KDYYFDSYAH…KNNRDLDFTV (302 aa). The S-adenosyl-L-methionine site is built by histidine 43, arginine 52, glycine 76, glutamate 98, and glutamate 127. Catalysis depends on residues glutamate 142 and glutamate 151.

It belongs to the class I-like SAM-binding methyltransferase superfamily. Protein arginine N-methyltransferase family. In terms of assembly, homodimer. Homooctamer; individual homodimers associates to form a homooctamer and homooligomerization is required for proper localization to the cell membrane. Individual homodimers can associate to form a homohexamer. Component of a complex with lsm14a/rap55a. Interacts with cirbp.

It is found in the nucleus. The protein resides in the nucleoplasm. The protein localises to the cytoplasm. It localises to the cytosol. It carries out the reaction L-arginyl-[protein] + 2 S-adenosyl-L-methionine = N(omega),N(omega)-dimethyl-L-arginyl-[protein] + 2 S-adenosyl-L-homocysteine + 2 H(+). The catalysed reaction is L-arginyl-[protein] + S-adenosyl-L-methionine = N(omega)-methyl-L-arginyl-[protein] + S-adenosyl-L-homocysteine + H(+). The enzyme catalyses N(omega)-methyl-L-arginyl-[protein] + S-adenosyl-L-methionine = N(omega),N(omega)-dimethyl-L-arginyl-[protein] + S-adenosyl-L-homocysteine + H(+). In terms of biological role, arginine methyltransferase that methylates (mono and asymmetric dimethylation) the guanidino nitrogens of arginyl residues present in target proteins. Constitutes the main enzyme that mediates monomethylation and asymmetric dimethylation of histone H4 'Arg-3' (H4R3me1 and H4R3me2a, respectively), a specific tag for epigenetic transcriptional activation. Methylates ilf3 to regulate its DNA-binding activity. Required for neural induction, playing a key role in the control of epidermal versus neural cell fate choice. Methylates cirbp to regulate its subcellular location. Acts transiently during metamorphosis as a transcription coactivator, enhancing thyroid hormone (T3) receptor (TR)-mediated transcription by enhancing TR binding to the T3 response element (TRE), and histone modification through recruitment of other coactivators. The chain is Protein arginine N-methyltransferase 1 from Xenopus tropicalis (Western clawed frog).